Reading from the N-terminus, the 136-residue chain is ATP synthase epsilon chain (136 aa).

It belongs to the ATPase epsilon chain family. F-type ATPases have 2 components, CF(1) - the catalytic core - and CF(0) - the membrane proton channel. CF(1) has five subunits: alpha(3), beta(3), gamma(1), delta(1), epsilon(1). CF(0) has three main subunits: a, b and c.

It is found in the cell inner membrane. Produces ATP from ADP in the presence of a proton gradient across the membrane. The protein is ATP synthase epsilon chain of Myxococcus xanthus (strain DK1622).